Here is a 429-residue protein sequence, read N- to C-terminus: Ribosomal RNA small subunit methyltransferase B (429 aa).

Residues 254–260, D277, D303, and D322 contribute to the S-adenosyl-L-methionine site; that span reads CAAPGGK. C375 serves as the catalytic Nucleophile. A disordered region spans residues 397 to 419; the sequence is ALSETGTPDQPGQQNLPGGEEGD. Residues 400 to 412 show a composition bias toward polar residues; the sequence is ETGTPDQPGQQNL.

The protein belongs to the class I-like SAM-binding methyltransferase superfamily. RsmB/NOP family.

The protein localises to the cytoplasm. The catalysed reaction is cytidine(967) in 16S rRNA + S-adenosyl-L-methionine = 5-methylcytidine(967) in 16S rRNA + S-adenosyl-L-homocysteine + H(+). Its function is as follows. Specifically methylates the cytosine at position 967 (m5C967) of 16S rRNA. This is Ribosomal RNA small subunit methyltransferase B from Salmonella choleraesuis (strain SC-B67).